The chain runs to 314 residues: Porphobilinogen deaminase (314 aa).

Cys243 carries the S-(dipyrrolylmethanemethyl)cysteine modification.

It belongs to the HMBS family. As to quaternary structure, monomer. The cofactor is dipyrromethane.

The enzyme catalyses 4 porphobilinogen + H2O = hydroxymethylbilane + 4 NH4(+). Its pathway is porphyrin-containing compound metabolism; protoporphyrin-IX biosynthesis; coproporphyrinogen-III from 5-aminolevulinate: step 2/4. Functionally, tetrapolymerization of the monopyrrole PBG into the hydroxymethylbilane pre-uroporphyrinogen in several discrete steps. The polypeptide is Porphobilinogen deaminase (Bordetella bronchiseptica (strain ATCC BAA-588 / NCTC 13252 / RB50) (Alcaligenes bronchisepticus)).